The primary structure comprises 32 residues: Yop proteins translocation protein A (32 aa).

This chain is Yop proteins translocation protein A (yscA), found in Yersinia enterocolitica serotype O:8 / biotype 1B (strain NCTC 13174 / 8081).